The sequence spans 285 residues: Release factor glutamine methyltransferase (285 aa).

S-adenosyl-L-methionine contacts are provided by aspartate 143 and asparagine 189. 189–192 is a substrate binding site; sequence NPPY.

This sequence belongs to the protein N5-glutamine methyltransferase family. PrmC subfamily.

The enzyme catalyses L-glutaminyl-[peptide chain release factor] + S-adenosyl-L-methionine = N(5)-methyl-L-glutaminyl-[peptide chain release factor] + S-adenosyl-L-homocysteine + H(+). In terms of biological role, methylates the class 1 translation termination release factors RF1/PrfA and RF2/PrfB on the glutamine residue of the universally conserved GGQ motif. The protein is Release factor glutamine methyltransferase of Clostridium acetobutylicum (strain ATCC 824 / DSM 792 / JCM 1419 / IAM 19013 / LMG 5710 / NBRC 13948 / NRRL B-527 / VKM B-1787 / 2291 / W).